Consider the following 276-residue polypeptide: MSSKSQLTYSARAQSHPNPLARKLFQVAEEKRSNVTVSADVTTTKELLDLADRLGPYIAVIKTHIDILSDFSQETIDGLNALAQKHNFLIFEDRKFIDIGNTVQKQYHNGTLRISEWAHIINCSILPGEGIVEALAQTAQATDFPYGSERGLLILAEMTSKGSLATGAYTSASVDIARKYPSFVLGFVSTRSLGEVESTEAPAQGEDFVVFTTGVNLSSKGDKLGQQYQTPQSAVGRGADFIISGRGIYAAADPVEAAKQYQQQGWEAYLARVGAQ.

Substrate is bound by residues Asp-40, 62 to 64 (KTH), 93 to 102 (DRKFIDIGNT), Tyr-228, and Arg-246. Lys-95 functions as the Proton donor in the catalytic mechanism.

The protein belongs to the OMP decarboxylase family.

The enzyme catalyses orotidine 5'-phosphate + H(+) = UMP + CO2. Its pathway is pyrimidine metabolism; UMP biosynthesis via de novo pathway; UMP from orotate: step 2/2. This Penicillium nalgiovense protein is Orotidine 5'-phosphate decarboxylase (pyrG).